The primary structure comprises 237 residues: Immunoglobulin superfamily member 6 (237 aa).

Residues 1–27 (MGPVSARRSRLRPEISLILFQVGMVGA) form the signal peptide. At 28–152 (CTVYVLQPGY…ERLFSKEVRS (125 aa)) the chain is on the extracellular side. The Ig-like C2-type domain maps to 30-134 (VYVLQPGYLE…ELSPSAKHVG (105 aa)). Cys-51 and Cys-118 are oxidised to a cystine. Residues 153-173 (FLIVLLALLSVYITGVCVTFI) form a helical membrane-spanning segment. At 174-237 (VLFKSKSNGP…RKALPNPGRA (64 aa)) the chain is on the cytoplasmic side. Over residues 215–229 (TSHLPEQEGTDENRK) the composition is skewed to basic and acidic residues. Residues 215-237 (TSHLPEQEGTDENRKALPNPGRA) are disordered.

In terms of tissue distribution, ubiquitous with higher expression in immune tissue.

Its subcellular location is the membrane. The polypeptide is Immunoglobulin superfamily member 6 (Igsf6) (Mus musculus (Mouse)).